Reading from the N-terminus, the 833-residue chain is Leucine--tRNA ligase (833 aa).

Residues 41-52 (PYPSGAGLHVGH) carry the 'HIGH' region motif. Positions 610–614 (KMSKS) match the 'KMSKS' region motif. An ATP-binding site is contributed by lysine 613.

Belongs to the class-I aminoacyl-tRNA synthetase family.

It localises to the cytoplasm. It catalyses the reaction tRNA(Leu) + L-leucine + ATP = L-leucyl-tRNA(Leu) + AMP + diphosphate. The protein is Leucine--tRNA ligase of Streptococcus pneumoniae (strain CGSP14).